We begin with the raw amino-acid sequence, 347 residues long: UPF0284 protein M1627_0030 (347 aa).

The protein belongs to the UPF0284 family.

This Saccharolobus islandicus (strain M.16.27) (Sulfolobus islandicus) protein is UPF0284 protein M1627_0030.